Consider the following 30-residue polypeptide: Kalata-B17 (30 aa).

A cross-link (cyclopeptide (Gly-Asn)) is located at residues 1–30 (GIPCAESCVYIPCTITALLGCKCKDQVCYN). Disulfide bonds link cysteine 4-cysteine 21, cysteine 8-cysteine 23, and cysteine 13-cysteine 28.

In terms of processing, this is a cyclic peptide.

Functionally, probably participates in a plant defense mechanism. The protein is Kalata-B17 of Oldenlandia affinis.